Consider the following 255-residue polypeptide: Type III pantothenate kinase (255 aa).

6–13 (DIGNSNIV) lines the ATP pocket. Substrate is bound by residues tyrosine 100 and 107–110 (GSDR). Residue aspartate 109 is the Proton acceptor of the active site. K(+) is bound at residue aspartate 129. An ATP-binding site is contributed by threonine 132. Threonine 184 contacts substrate.

The protein belongs to the type III pantothenate kinase family. In terms of assembly, homodimer. Requires NH4(+) as cofactor. The cofactor is K(+).

Its subcellular location is the cytoplasm. It catalyses the reaction (R)-pantothenate + ATP = (R)-4'-phosphopantothenate + ADP + H(+). It participates in cofactor biosynthesis; coenzyme A biosynthesis; CoA from (R)-pantothenate: step 1/5. In terms of biological role, catalyzes the phosphorylation of pantothenate (Pan), the first step in CoA biosynthesis. This is Type III pantothenate kinase from Brevibacillus brevis (strain 47 / JCM 6285 / NBRC 100599).